We begin with the raw amino-acid sequence, 3317 residues long: Cadherin-23 (3317 aa).

Residues 1–23 form the signal peptide; it reads MRHPPVTWCAMLWLLMLVSGSWG. The Extracellular portion of the chain corresponds to 24–3062; it reads QVNRLPFFTN…SVQLPDDMSA (3039 aa). Cadherin domains are found at residues 34-132, 133-236, 237-348, 349-458, 459-559, 560-669, 670-782, 777-888, 889-993, 994-1100, 1101-1206, 1208-1311, 1312-1416, 1418-1525, 1527-1632, 1633-1742, 1743-1849, 1850-1957, 1958-2067, 2068-2172, 2173-2291, 2295-2400, 2401-2507, 2508-2609, 2612-2720, 2727-2844, and 2845-2973; these read HFFD…APTF, HNQP…DPIF, INLP…APEF, NSSE…RPIF, SQPL…VPTF, QKDA…PPTF, SKPA…APYY, KDAP…DPTF, QNLP…TPTF, FPAV…RPIF, LQSS…APVF, QQQY…AVQF, SNAS…SPRF, FTSD…PPVI, SPFG…APVF, QQPH…VPTF, PRDY…DPVL, LNLP…HPLF, TEGT…WPTF, SPPA…RPEF, LNPI…TPQF, GITY…NPIF, DQLS…RPQF, SKPQ…RPVF, PPNG…EPLF, SPQY…PPRF, and TKAE…EEEF. 2 N-linked (GlcNAc...) asparagine glycosylation sites follow: asparagine 155 and asparagine 206. Asparagine 349, asparagine 391, asparagine 432, asparagine 464, asparagine 470, asparagine 600, asparagine 692, asparagine 763, asparagine 808, asparagine 825, asparagine 939, asparagine 999, asparagine 1016, asparagine 1169, asparagine 1280, asparagine 1313, asparagine 1471, asparagine 1532, asparagine 1649, asparagine 1665, asparagine 1816, asparagine 1855, asparagine 1887, asparagine 1900, asparagine 2012, asparagine 2048, asparagine 2127, asparagine 2166, asparagine 2193, asparagine 2261, asparagine 2355, and asparagine 2367 each carry an N-linked (GlcNAc...) asparagine glycan. Residues asparagine 2576, asparagine 2614, asparagine 2747, asparagine 2806, asparagine 2875, asparagine 2894, asparagine 2939, and asparagine 2979 are each glycosylated (N-linked (GlcNAc...) asparagine). Residues 3063–3083 traverse the membrane as a helical segment; the sequence is LQMAIIVLAILLFLAAMLFVL. The Cytoplasmic segment spans residues 3084–3317; sequence MNWYYRTIHK…MESPLEITEL (234 aa).

As to quaternary structure, antiparallel heterodimer with PCDH15. Interacts with USH1C and USH1G.

The protein resides in the cell membrane. Functionally, cadherins are calcium-dependent cell adhesion proteins. They preferentially interact with themselves in a homophilic manner in connecting cells. CDH23 is required for establishing and/or maintaining the proper organization of the stereocilia bundle of hair cells in the cochlea and the vestibule during late embryonic/early postnatal development. It is part of the functional network formed by USH1C, USH1G, CDH23 and MYO7A that mediates mechanotransduction in cochlear hair cells. Required for normal hearing. The polypeptide is Cadherin-23 (Cdh23) (Rattus norvegicus (Rat)).